A 70-amino-acid chain; its full sequence is Putative membrane protein insertion efficiency factor (70 aa).

The protein belongs to the UPF0161 family.

It is found in the cell inner membrane. Functionally, could be involved in insertion of integral membrane proteins into the membrane. The chain is Putative membrane protein insertion efficiency factor from Desulforapulum autotrophicum (strain ATCC 43914 / DSM 3382 / VKM B-1955 / HRM2) (Desulfobacterium autotrophicum).